The chain runs to 311 residues: Cytochrome f (311 aa).

The first 27 residues, 1 to 27, serve as a signal peptide directing secretion; sequence MRRHLSLVLGSLVIGLALLIAPGASWA. Residues Tyr28, Cys48, Cys51, and His52 each contribute to the heme site. The helical transmembrane segment at 277 to 297 threads the bilayer; the sequence is IYGLLAFFAAVAIAQIMLVLK.

The protein belongs to the cytochrome f family. As to quaternary structure, the 4 large subunits of the cytochrome b6-f complex are cytochrome b6, subunit IV (17 kDa polypeptide, PetD), cytochrome f and the Rieske protein, while the 4 small subunits are PetG, PetL, PetM and PetN. The complex functions as a dimer. It depends on heme as a cofactor.

The protein localises to the cellular thylakoid membrane. Functionally, component of the cytochrome b6-f complex, which mediates electron transfer between photosystem II (PSII) and photosystem I (PSI), cyclic electron flow around PSI, and state transitions. The sequence is that of Cytochrome f from Synechococcus sp. (strain CC9902).